We begin with the raw amino-acid sequence, 275 residues long: Membrane protein insertase YidC 1 (275 aa).

Positions 1–25 are cleaved as a signal peptide; the sequence is MRKVLRVKKNIKIARIVPLVLLLVA. A lipid anchor (N-palmitoyl cysteine) is attached at cysteine 26. Cysteine 26 is lipidated: S-diacylglycerol cysteine. The next 5 helical transmembrane spans lie at 58 to 78, 129 to 149, 171 to 191, 198 to 216, and 222 to 240; these read SIGV…MPLF, YASL…FQAL, LYLL…LTNL, VMMT…FMGF, and VVLY…LLLL.

It belongs to the OXA1/ALB3/YidC family. Type 2 subfamily.

It localises to the cell membrane. Its function is as follows. Required for the insertion and/or proper folding and/or complex formation of integral membrane proteins into the membrane. Involved in integration of membrane proteins that insert both dependently and independently of the Sec translocase complex, as well as at least some lipoproteins. The chain is Membrane protein insertase YidC 1 from Streptococcus pyogenes serotype M1.